Consider the following 171-residue polypeptide: Ribosome maturation factor RimM (171 aa).

The region spanning 93–167 (DGVYYYKDIF…KVYVELMEGL (75 aa)) is the PRC barrel domain.

It belongs to the RimM family. As to quaternary structure, binds ribosomal protein uS19.

It localises to the cytoplasm. Its function is as follows. An accessory protein needed during the final step in the assembly of 30S ribosomal subunit, possibly for assembly of the head region. Essential for efficient processing of 16S rRNA. May be needed both before and after RbfA during the maturation of 16S rRNA. It has affinity for free ribosomal 30S subunits but not for 70S ribosomes. This is Ribosome maturation factor RimM from Lactobacillus helveticus (strain DPC 4571).